A 498-amino-acid polypeptide reads, in one-letter code: WD repeat-containing protein 55 homolog (498 aa).

Residues 1–133 (MHTHNNFKTP…TFDLDEDDET (133 aa)) form a disordered region. Acidic residues-rich tracts occupy residues 12 to 23 (DEDELDDLDEDM), 31 to 48 (IEQE…EYDL), and 83 to 95 (SDSD…DAGD). The segment covering 114–123 (PSGSNRQSEA) has biased composition (polar residues). 6 WD repeats span residues 155–194 (KLED…NKLL), 199–238 (VHSK…LKKL), 242–280 (AHDD…AIFE), 283–322 (ELED…MYVQ), 325–364 (PYEE…YHCD), and 409–448 (QHNM…DFGD).

This sequence belongs to the WD repeat WDR55 family.

This chain is WD repeat-containing protein 55 homolog, found in Drosophila erecta (Fruit fly).